The chain runs to 188 residues: Elongation factor P (188 aa).

Belongs to the elongation factor P family.

It localises to the cytoplasm. It participates in protein biosynthesis; polypeptide chain elongation. Its function is as follows. Involved in peptide bond synthesis. Stimulates efficient translation and peptide-bond synthesis on native or reconstituted 70S ribosomes in vitro. Probably functions indirectly by altering the affinity of the ribosome for aminoacyl-tRNA, thus increasing their reactivity as acceptors for peptidyl transferase. This Chlorobium phaeobacteroides (strain DSM 266 / SMG 266 / 2430) protein is Elongation factor P.